Reading from the N-terminus, the 160-residue chain is Transcriptional repressor NrdR (160 aa).

The segment at 3-34 (CPYCQYEDTQVKDSRPSEEGTVIRRRRICSVC) is a zinc-finger region. In terms of domain architecture, ATP-cone spans 49-139 (LLVLKKSGRY…VYRDFRNASD (91 aa)).

Belongs to the NrdR family. Requires Zn(2+) as cofactor.

In terms of biological role, negatively regulates transcription of bacterial ribonucleotide reductase nrd genes and operons by binding to NrdR-boxes. This chain is Transcriptional repressor NrdR, found in Bartonella henselae (strain ATCC 49882 / DSM 28221 / CCUG 30454 / Houston 1) (Rochalimaea henselae).